We begin with the raw amino-acid sequence, 155 residues long: Ribonuclease H (155 aa).

Residues 1–146 form the RNase H type-1 domain; that stretch reads MNALFAWTDG…ADELARAGMA (146 aa). Mg(2+) is bound by residues Asp9, Glu52, Asp74, and Asp138.

Belongs to the RNase H family. In terms of assembly, monomer. The cofactor is Mg(2+).

The protein resides in the cytoplasm. It carries out the reaction Endonucleolytic cleavage to 5'-phosphomonoester.. Endonuclease that specifically degrades the RNA of RNA-DNA hybrids. This Paracoccus denitrificans (strain Pd 1222) protein is Ribonuclease H.